Reading from the N-terminus, the 152-residue chain is D-aminoacyl-tRNA deacylase (152 aa).

The Gly-cisPro motif, important for rejection of L-amino acids signature appears at 142–143 (GP).

Belongs to the DTD family. Homodimer.

It is found in the cytoplasm. It catalyses the reaction glycyl-tRNA(Ala) + H2O = tRNA(Ala) + glycine + H(+). The enzyme catalyses a D-aminoacyl-tRNA + H2O = a tRNA + a D-alpha-amino acid + H(+). In terms of biological role, an aminoacyl-tRNA editing enzyme that deacylates mischarged D-aminoacyl-tRNAs. Also deacylates mischarged glycyl-tRNA(Ala), protecting cells against glycine mischarging by AlaRS. Acts via tRNA-based rather than protein-based catalysis; rejects L-amino acids rather than detecting D-amino acids in the active site. By recycling D-aminoacyl-tRNA to D-amino acids and free tRNA molecules, this enzyme counteracts the toxicity associated with the formation of D-aminoacyl-tRNA entities in vivo and helps enforce protein L-homochirality. The protein is D-aminoacyl-tRNA deacylase of Burkholderia vietnamiensis (strain G4 / LMG 22486) (Burkholderia cepacia (strain R1808)).